Here is a 485-residue protein sequence, read N- to C-terminus: Regulatory protein ViaA (485 aa).

Belongs to the ViaA family. In terms of assembly, homodimer. Interacts with RavA.

It is found in the cytoplasm. In terms of biological role, component of the RavA-ViaA chaperone complex, which may act on the membrane to optimize the function of some of the respiratory chains. ViaA stimulates the ATPase activity of RavA. The sequence is that of Regulatory protein ViaA from Proteus mirabilis (strain HI4320).